The chain runs to 80 residues: D-alanyl carrier protein 2 (80 aa).

One can recognise a Carrier domain in the interval 1-80; that stretch reads MIMDDVKATV…KIVAKVASLQ (80 aa). Residue S38 is modified to O-(pantetheine 4'-phosphoryl)serine.

The protein belongs to the DltC family. 4'-phosphopantetheine is transferred from CoA to a specific serine of apo-DCP.

The protein localises to the cytoplasm. It functions in the pathway cell wall biogenesis; lipoteichoic acid biosynthesis. Carrier protein involved in the D-alanylation of lipoteichoic acid (LTA). The loading of thioester-linked D-alanine onto DltC is catalyzed by D-alanine--D-alanyl carrier protein ligase DltA. The DltC-carried D-alanyl group is further transferred to cell membrane phosphatidylglycerol (PG) by forming an ester bond, probably catalyzed by DltD. D-alanylation of LTA plays an important role in modulating the properties of the cell wall in Gram-positive bacteria, influencing the net charge of the cell wall. The sequence is that of D-alanyl carrier protein 2 from Lactiplantibacillus plantarum (strain ATCC BAA-793 / NCIMB 8826 / WCFS1) (Lactobacillus plantarum).